Here is an 881-residue protein sequence, read N- to C-terminus: Alanine--tRNA ligase (881 aa).

4 residues coordinate Zn(2+): histidine 568, histidine 572, cysteine 670, and histidine 674.

The protein belongs to the class-II aminoacyl-tRNA synthetase family. Requires Zn(2+) as cofactor.

The protein localises to the cytoplasm. The catalysed reaction is tRNA(Ala) + L-alanine + ATP = L-alanyl-tRNA(Ala) + AMP + diphosphate. Functionally, catalyzes the attachment of alanine to tRNA(Ala) in a two-step reaction: alanine is first activated by ATP to form Ala-AMP and then transferred to the acceptor end of tRNA(Ala). Also edits incorrectly charged Ser-tRNA(Ala) and Gly-tRNA(Ala) via its editing domain. In Clostridium acetobutylicum (strain ATCC 824 / DSM 792 / JCM 1419 / IAM 19013 / LMG 5710 / NBRC 13948 / NRRL B-527 / VKM B-1787 / 2291 / W), this protein is Alanine--tRNA ligase.